The chain runs to 190 residues: Elongation factor P-like protein (190 aa).

The protein belongs to the elongation factor P family.

This chain is Elongation factor P-like protein, found in Shigella boydii serotype 4 (strain Sb227).